A 1213-amino-acid chain; its full sequence is DNA-directed RNA polymerase subunit beta' (1213 aa).

Zn(2+) is bound by residues Cys-60, Cys-62, Cys-75, and Cys-78. Mg(2+) is bound by residues Asp-450, Asp-452, and Asp-454. Positions 819, 893, 900, and 903 each coordinate Zn(2+).

This sequence belongs to the RNA polymerase beta' chain family. In terms of assembly, the RNAP catalytic core consists of 2 alpha, 1 beta, 1 beta' and 1 omega subunit. When a sigma factor is associated with the core the holoenzyme is formed, which can initiate transcription. The cofactor is Mg(2+). It depends on Zn(2+) as a cofactor.

It catalyses the reaction RNA(n) + a ribonucleoside 5'-triphosphate = RNA(n+1) + diphosphate. DNA-dependent RNA polymerase catalyzes the transcription of DNA into RNA using the four ribonucleoside triphosphates as substrates. This Streptococcus pyogenes serotype M4 (strain MGAS10750) protein is DNA-directed RNA polymerase subunit beta'.